The primary structure comprises 113 residues: Insulin (113 aa).

Positions 1-24 are cleaved as a signal peptide; it reads MAALWLQAFSLLVLMMVSWPGSQA. Cystine bridges form between Cys32–Cys99, Cys44–Cys112, and Cys98–Cys103. Residues 56–90 constitute a propeptide, c peptide; the sequence is DVDPLLGFLPPKAGGAVVQGGENEVTFKDQMEMMV.

It belongs to the insulin family. Heterodimer of a B chain and an A chain linked by two disulfide bonds.

The protein resides in the secreted. In terms of biological role, insulin decreases blood glucose concentration. It increases cell permeability to monosaccharides, amino acids and fatty acids. It accelerates glycolysis, the pentose phosphate cycle, and glycogen synthesis in liver. This chain is Insulin (ins), found in Oreochromis niloticus (Nile tilapia).